Here is a 715-residue protein sequence, read N- to C-terminus: Fatty acid oxidation complex subunit alpha (715 aa).

The tract at residues 1–190 (MIYQGKAITV…KVGAVDAVVA (190 aa)) is enoyl-CoA hydratase/isomerase. Asp-297 serves as a coordination point for substrate. The interval 312–715 (KDVKLAAVLG…MAKNGQKFFG (404 aa)) is 3-hydroxyacyl-CoA dehydrogenase. Residues Met-325, Asp-344, 401 to 403 (VVE), Lys-408, and Ser-430 each bind NAD(+). His-451 serves as the catalytic For 3-hydroxyacyl-CoA dehydrogenase activity. Asn-454 provides a ligand contact to NAD(+). Asn-501 and Tyr-660 together coordinate substrate.

The protein in the N-terminal section; belongs to the enoyl-CoA hydratase/isomerase family. It in the C-terminal section; belongs to the 3-hydroxyacyl-CoA dehydrogenase family. As to quaternary structure, heterotetramer of two alpha chains (FadB) and two beta chains (FadA).

It catalyses the reaction a (3S)-3-hydroxyacyl-CoA + NAD(+) = a 3-oxoacyl-CoA + NADH + H(+). The enzyme catalyses a (3S)-3-hydroxyacyl-CoA = a (2E)-enoyl-CoA + H2O. The catalysed reaction is a 4-saturated-(3S)-3-hydroxyacyl-CoA = a (3E)-enoyl-CoA + H2O. It carries out the reaction (3S)-3-hydroxybutanoyl-CoA = (3R)-3-hydroxybutanoyl-CoA. It catalyses the reaction a (3Z)-enoyl-CoA = a 4-saturated (2E)-enoyl-CoA. The enzyme catalyses a (3E)-enoyl-CoA = a 4-saturated (2E)-enoyl-CoA. The protein operates within lipid metabolism; fatty acid beta-oxidation. In terms of biological role, involved in the aerobic and anaerobic degradation of long-chain fatty acids via beta-oxidation cycle. Catalyzes the formation of 3-oxoacyl-CoA from enoyl-CoA via L-3-hydroxyacyl-CoA. It can also use D-3-hydroxyacyl-CoA and cis-3-enoyl-CoA as substrate. The chain is Fatty acid oxidation complex subunit alpha from Pseudomonas aeruginosa (strain LESB58).